Reading from the N-terminus, the 313-residue chain is uncharacterized protein (313 aa).

An N-acetyltransferase domain is found at 6 to 152; sequence YDILENPEPN…YHASMEKMTG (147 aa).

Its function is as follows. To the C-terminal of C.elegans F21C10.9. This is an uncharacterized protein from Caenorhabditis elegans.